We begin with the raw amino-acid sequence, 389 residues long: Chalcone synthase 4-1 (389 aa).

Cysteine 164 is an active-site residue.

The protein belongs to the thiolase-like superfamily. Chalcone/stilbene synthases family.

The catalysed reaction is (E)-4-coumaroyl-CoA + 3 malonyl-CoA + 3 H(+) = 2',4,4',6'-tetrahydroxychalcone + 3 CO2 + 4 CoA. It functions in the pathway secondary metabolite biosynthesis; flavonoid biosynthesis. The primary product of this enzyme is 4,2',4',6'-tetrahydroxychalcone (also termed naringenin-chalcone or chalcone) which can under specific conditions spontaneously isomerize into naringenin. This Medicago sativa (Alfalfa) protein is Chalcone synthase 4-1 (CHS4-1).